A 416-amino-acid polypeptide reads, in one-letter code: Muscle-specific homeobox protein tinman (416 aa).

2 stretches are compositionally biased toward polar residues: residues methionine 1–serine 11 and tyrosine 18–leucine 33. Disordered stretches follow at residues methionine 1 to leucine 33, threonine 246 to arginine 305, and valine 391 to methionine 416. The segment covering asparagine 281–serine 295 has biased composition (low complexity). The homeobox DNA-binding region spans lysine 301 to aspartate 360. Positions methionine 397 to methionine 416 are enriched in low complexity.

It localises to the nucleus. Functionally, required for the development of heart and visceral muscle; for the formation of somatic muscles. Has a crucial function in the early mesodermal subdivisions. This Drosophila melanogaster (Fruit fly) protein is Muscle-specific homeobox protein tinman (tin).